The sequence spans 1007 residues: Beta-galactosidase (1007 aa).

A disordered region spans residues 29–48; it reads TIPPHSDHESFQSQEELEEG. The Proton donor role is filled by glutamate 465. Glutamate 532 acts as the Nucleophile in catalysis.

Belongs to the glycosyl hydrolase 2 family. Monomer.

The catalysed reaction is Hydrolysis of terminal non-reducing beta-D-galactose residues in beta-D-galactosides.. This Lactobacillus delbrueckii subsp. bulgaricus protein is Beta-galactosidase (lacZ).